The chain runs to 320 residues: Tetraacyldisaccharide 4'-kinase (320 aa).

53-60 (SVGGNGKT) is an ATP binding site.

This sequence belongs to the LpxK family.

It carries out the reaction a lipid A disaccharide + ATP = a lipid IVA + ADP + H(+). It participates in glycolipid biosynthesis; lipid IV(A) biosynthesis; lipid IV(A) from (3R)-3-hydroxytetradecanoyl-[acyl-carrier-protein] and UDP-N-acetyl-alpha-D-glucosamine: step 6/6. Its function is as follows. Transfers the gamma-phosphate of ATP to the 4'-position of a tetraacyldisaccharide 1-phosphate intermediate (termed DS-1-P) to form tetraacyldisaccharide 1,4'-bis-phosphate (lipid IVA). This is Tetraacyldisaccharide 4'-kinase from Psychromonas ingrahamii (strain DSM 17664 / CCUG 51855 / 37).